A 224-amino-acid chain; its full sequence is Ethylene-inducing xylanase 5 (224 aa).

An N-terminal signal peptide occupies residues Met1–Ala16. Positions Gln32–Ala218 constitute a GH11 domain. The N-linked (GlcNAc...) asparagine glycan is linked to Asn88. Glu117 (nucleophile) is an active-site residue. The active-site Proton donor is Glu205.

Belongs to the glycosyl hydrolase 11 (cellulase G) family.

It catalyses the reaction Endohydrolysis of (1-&gt;4)-beta-D-xylosidic linkages in xylans.. It functions in the pathway glycan degradation; xylan degradation. Functionally, endo-1,4-beta-xylanase involved in the hydrolysis of xylan, a major structural heterogeneous polysaccharide found in plant biomass representing the second most abundant polysaccharide in the biosphere, after cellulose. May act as an elicitor of plant defense responses in certain plants but does not exhibit any cell death when transiently expressed in N.benthamiana. The polypeptide is Ethylene-inducing xylanase 5 (Verticillium dahliae (strain VdLs.17 / ATCC MYA-4575 / FGSC 10137) (Verticillium wilt)).